The primary structure comprises 681 residues: RNA polymerase sigma factor RpoD (681 aa).

Disordered stretches follow at residues 1–60 (MKKK…ETAK) and 239–270 (DDDE…VSEK). The span at 261-270 (EERKKVVSEK) shows a compositional bias: basic and acidic residues. The segment at 446 to 516 (MAKSNLRLVV…SRAIADQART (71 aa)) is sigma-70 factor domain-2. The short motif at 470-473 (DLIQ) is the Interaction with polymerase core subunit RpoC element. Positions 525 to 601 (DTINRINKVM…DKNIVSSIDH (77 aa)) are sigma-70 factor domain-3. Residues 614-668 (VLDQLNEREKAVIRMRFGLLDDESDRTLEEIGKELNVTRERVRQIESSAIKKLRS) are sigma-70 factor domain-4. The segment at residues 641 to 660 (LEEIGKELNVTRERVRQIES) is a DNA-binding region (H-T-H motif).

This sequence belongs to the sigma-70 factor family. RpoD/SigA subfamily. In terms of assembly, interacts transiently with the RNA polymerase catalytic core.

It is found in the cytoplasm. Functionally, sigma factors are initiation factors that promote the attachment of RNA polymerase to specific initiation sites and are then released. This sigma factor is the primary sigma factor during exponential growth. This chain is RNA polymerase sigma factor RpoD, found in Helicobacter pylori (strain J99 / ATCC 700824) (Campylobacter pylori J99).